The sequence spans 368 residues: 3-dehydroquinate synthase (368 aa).

NAD(+) contacts are provided by residues D71 to K76, G105 to D109, T129 to T130, K142, K151, and T169 to T172. Positions 184, 247, and 264 each coordinate Zn(2+).

Belongs to the sugar phosphate cyclases superfamily. Dehydroquinate synthase family. The cofactor is NAD(+). Requires Co(2+) as cofactor. Zn(2+) is required as a cofactor.

Its subcellular location is the cytoplasm. The enzyme catalyses 7-phospho-2-dehydro-3-deoxy-D-arabino-heptonate = 3-dehydroquinate + phosphate. Its pathway is metabolic intermediate biosynthesis; chorismate biosynthesis; chorismate from D-erythrose 4-phosphate and phosphoenolpyruvate: step 2/7. In terms of biological role, catalyzes the conversion of 3-deoxy-D-arabino-heptulosonate 7-phosphate (DAHP) to dehydroquinate (DHQ). This chain is 3-dehydroquinate synthase, found in Ralstonia nicotianae (strain ATCC BAA-1114 / GMI1000) (Ralstonia solanacearum).